The primary structure comprises 570 residues: Guanine nucleotide-binding protein alpha-3 subunit (570 aa).

The region spanning 10-113 (RETLRAYLSK…WIEAIKHAIE (104 aa)) is the PH domain. In terms of domain architecture, G-alpha spans 144–570 (PVLKLLLLGT…IISKTLEFYC (427 aa)). The interval 147–160 (KLLLLGTGESGKST) is G1 motif. 152–159 (GTGESGKS) is a GTP binding site. Serine 159 is a binding site for Mg(2+). Composition is skewed to low complexity over residues 254–272 (NNNSNSSSLKNNSGGSSSS) and 290–316 (NSNSASPNGPSSSTTTSTINTHNRSNS). The interval 254–321 (NNNSNSSSLK…NRSNSDGSSN (68 aa)) is disordered. Positions 386–394 (DILKSRATT) are G2 motif. Residues 388–394 (LKSRATT), 414–418 (DVAGQ), 483–486 (NKID), and alanine 544 contribute to the GTP site. Threonine 394 is a Mg(2+) binding site. The tract at residues 410 to 419 (FRIVDVAGQR) is G3 motif. Residues 479–486 (ILFLNKID) form a G4 motif region. The segment at 542–547 (TCATDT) is G5 motif.

Belongs to the G-alpha family. In terms of assembly, g proteins are composed of 3 units; alpha, beta and gamma. The alpha chain contains the guanine nucleotide binding site.

Functionally, guanine nucleotide-binding proteins (G proteins) are involved as modulators or transducers in various transmembrane signaling systems. G alpha-3 plays a role in development. G alpha-3 mutants fail to aggregate. The sequence is that of Guanine nucleotide-binding protein alpha-3 subunit (gpaC) from Dictyostelium discoideum (Social amoeba).